The sequence spans 246 residues: UDP-N-acetyl-D-mannosaminuronic acid transferase (246 aa).

Belongs to the glycosyltransferase 26 family.

The catalysed reaction is UDP-N-acetyl-alpha-D-mannosaminouronate + N-acetyl-alpha-D-glucosaminyl-di-trans,octa-cis-undecaprenyl diphosphate = beta-D-ManNAcA-(1-&gt;4)-alpha-D-GlcNAc-di-trans,octa-cis-undecaprenyl diphosphate + UDP + H(+). The protein operates within bacterial outer membrane biogenesis; enterobacterial common antigen biosynthesis. Functionally, catalyzes the synthesis of Und-PP-GlcNAc-ManNAcA (Lipid II), the second lipid-linked intermediate involved in enterobacterial common antigen (ECA) synthesis. The sequence is that of UDP-N-acetyl-D-mannosaminuronic acid transferase from Escherichia coli O6:K15:H31 (strain 536 / UPEC).